Consider the following 87-residue polypeptide: Mitotic-spindle organizing protein 1 (87 aa).

It belongs to the MOZART1 family. In terms of assembly, part of the gamma-tubulin complex.

It is found in the cytoplasm. It localises to the cytoskeleton. Its subcellular location is the microtubule organizing center. The protein localises to the spindle pole body. Required for gamma-tubulin complex recruitment to the microtubule organizing center (MTOC). In Chaetomium globosum (strain ATCC 6205 / CBS 148.51 / DSM 1962 / NBRC 6347 / NRRL 1970) (Soil fungus), this protein is Mitotic-spindle organizing protein 1.